A 223-amino-acid chain; its full sequence is DNA mismatch repair protein MutH (223 aa).

It belongs to the MutH family.

Its subcellular location is the cytoplasm. Its function is as follows. Sequence-specific endonuclease that cleaves unmethylated GATC sequences. It is involved in DNA mismatch repair. In Shewanella baltica (strain OS223), this protein is DNA mismatch repair protein MutH.